The chain runs to 336 residues: UDP-N-acetylmuramoylpentapeptide-lysine N(6)-alanyltransferase (336 aa).

Substrate-binding positions include 37–40 (KNNW), Y104, R212, Y216, and Y257.

It belongs to the FemABX family.

It carries out the reaction UDP-N-acetyl-alpha-D-muramoyl-L-alanyl-gamma-D-glutamyl-L-lysyl-D-alanyl-D-alanine + L-alanyl-tRNA(Ala) = UDP-N-acetyl-alpha-D-muramoyl-L-alanyl-gamma-D-glutamyl-N(6)-(L-alanyl)-L-lysyl-D-alanyl-D-alanine + tRNA(Ala) + H(+). Involved in the synthesis of the bacterial cell wall. Catalyzes the addition of alanine into the interchain peptide bridge of peptidoglycan precursor using aminoacyl-tRNA(Ala) as amino acid donor. This alanine is added to the epsilon-amino group of the L-lysine of the peptidoglycan UDP-N-acetyl-alpha-D-muramoyl-L-alanyl-D-glutamyl-L-lysyl-D-alanyl-D-alanine, in a ribosome-independent mechanism. Specific for UDP-N-acetyl-muramoyl-pentapeptide. Has no activity toward UDP-N-acetyl-muramoyl-tetrapeptide or UDP-N-acetyl-muramoyl-tripeptide. Also acts on L-seryl-tRNA(Ser). This is UDP-N-acetylmuramoylpentapeptide-lysine N(6)-alanyltransferase from Weissella viridescens (Lactobacillus viridescens).